Reading from the N-terminus, the 219-residue chain is Orotate phosphoribosyltransferase (219 aa).

K26 is a binding site for 5-phospho-alpha-D-ribose 1-diphosphate. 34-35 (FF) contacts orotate. 5-phospho-alpha-D-ribose 1-diphosphate-binding positions include 72–73 (YK), R102, K103, K106, H108, and 128–136 (DDVITAGTA). The orotate site is built by T132 and R160.

The protein belongs to the purine/pyrimidine phosphoribosyltransferase family. PyrE subfamily. Homodimer.

The catalysed reaction is orotidine 5'-phosphate + diphosphate = orotate + 5-phospho-alpha-D-ribose 1-diphosphate. It participates in pyrimidine metabolism; UMP biosynthesis via de novo pathway; UMP from orotate: step 1/2. Catalyzes the transfer of a ribosyl phosphate group from 5-phosphoribose 1-diphosphate to orotate, leading to the formation of orotidine monophosphate (OMP). The sequence is that of Orotate phosphoribosyltransferase (URA5) from Yarrowia lipolytica (strain CLIB 122 / E 150) (Yeast).